Consider the following 216-residue polypeptide: Ceramide-1-phosphate transfer protein (216 aa).

An N-acylsphingoid base 1-phosphate-binding residues include Asp56, Lys60, Arg108, Arg112, and His152.

It belongs to the GLTP family.

It is found in the cytoplasm. Its subcellular location is the cytosol. The protein localises to the golgi apparatus. It localises to the trans-Golgi network membrane. The protein resides in the cell membrane. It is found in the endosome membrane. Its subcellular location is the nucleus outer membrane. The enzyme catalyses N-(hexadecanoyl)-sphing-4-enine-1-phosphate(in) = N-(hexadecanoyl)-sphing-4-enine-1-phosphate(out). It carries out the reaction N-(9Z-octadecenoyl)-sphing-4-enine-1-phosphate(in) = N-(9Z-octadecenoyl)-sphing-4-enine-1-phosphate(out). Mediates the intracellular transfer of ceramide-1-phosphate (C1P) between organelle membranes and the cell membrane. Required for normal structure of the Golgi stacks. Can bind phosphoceramides with a variety of aliphatic chains, but has a preference for lipids with saturated C16:0 or monounsaturated C18:1 aliphatic chains, and is inefficient with phosphoceramides containing lignoceryl (C24:0). Plays a role in the regulation of the cellular levels of ceramide-1-phosphate, and thereby contributes to the regulation of phospholipase PLA2G4A activity and the release of arachidonic acid. Has no activity with galactosylceramide, lactosylceramide, sphingomyelin, phosphatidylcholine, phosphatidic acid and ceramide. C1P transfer is stimulated by phosphatidylserine in C1P source vesicles. Regulates autophagy, inflammasome mediated IL1B and IL18 processing, and pyroptosis, but not apoptosis. The chain is Ceramide-1-phosphate transfer protein (Cptp) from Rattus norvegicus (Rat).